A 300-amino-acid polypeptide reads, in one-letter code: Peptidyl-prolyl cis-trans isomerase E (300 aa).

In terms of domain architecture, RRM spans 6-84; the sequence is RTIYVGGLAD…RTIRVNLAKP (79 aa). In terms of domain architecture, PPIase cyclophilin-type spans 142–298; that stretch reads FFDIRIGGND…QKIVIYSCGE (157 aa).

The protein belongs to the cyclophilin-type PPIase family. PPIase E subfamily.

The protein resides in the nucleus. The catalysed reaction is [protein]-peptidylproline (omega=180) = [protein]-peptidylproline (omega=0). Its function is as follows. PPIases accelerate the folding of proteins. It catalyzes the cis-trans isomerization of proline imidic peptide bonds in oligopeptides. Combines RNA-binding and PPIase activities. This chain is Peptidyl-prolyl cis-trans isomerase E (cyp33), found in Drosophila melanogaster (Fruit fly).